A 393-amino-acid polypeptide reads, in one-letter code: Chalcone synthase 2 (393 aa).

Cys166 is an active-site residue.

The protein belongs to the thiolase-like superfamily. Chalcone/stilbene synthases family.

It carries out the reaction (E)-4-coumaroyl-CoA + 3 malonyl-CoA + 3 H(+) = 2',4,4',6'-tetrahydroxychalcone + 3 CO2 + 4 CoA. It participates in secondary metabolite biosynthesis; flavonoid biosynthesis. Its function is as follows. The primary product of this enzyme is 4,2',4',6'-tetrahydroxychalcone (also termed naringenin-chalcone or chalcone) which can under specific conditions spontaneously isomerize into naringenin. This is Chalcone synthase 2 (CHS2) from Ruta graveolens (Common rue).